Reading from the N-terminus, the 176-residue chain is N,N-dimethyl phenylurea N-demethylase subunit beta (176 aa).

Belongs to the bacterial ring-hydroxylating dioxygenase beta subunit family. In terms of assembly, pdmA (subunit alpha) and PdmB (subunit beta) form the oxygenase component of a bacterial Rieske non-heme iron oxygenase (RO) system.

The enzyme catalyses a 1,1-dimethyl-3-phenylurea + 2 reduced [2Fe-2S]-[ferredoxin] + O2 + 2 H(+) = a 1-methyl-3-phenylurea + formaldehyde + 2 oxidized [2Fe-2S]-[ferredoxin] + H2O. The catalysed reaction is isoproturon + 2 reduced [2Fe-2S]-[ferredoxin] + O2 + 2 H(+) = 1-methyl-3-[4-(propan-2-yl)phenyl]urea + formaldehyde + 2 oxidized [2Fe-2S]-[ferredoxin] + H2O. It carries out the reaction chlorotoluron + 2 reduced [2Fe-2S]-[ferredoxin] + O2 + 2 H(+) = 3-(3-chloro-4-methylphenyl)-1-methylurea + formaldehyde + 2 oxidized [2Fe-2S]-[ferredoxin] + H2O. It catalyses the reaction metoxuron + 2 reduced [2Fe-2S]-[ferredoxin] + O2 + 2 H(+) = 3-(3-chloro-4-methoxylphenyl)-1-methylurea + formaldehyde + 2 oxidized [2Fe-2S]-[ferredoxin] + H2O. The enzyme catalyses monuron + 2 reduced [2Fe-2S]-[ferredoxin] + O2 + 2 H(+) = 3-(4-chlorophenyl)-1-methylurea + formaldehyde + 2 oxidized [2Fe-2S]-[ferredoxin] + H2O. The catalysed reaction is diuron + 2 reduced [2Fe-2S]-[ferredoxin] + O2 + 2 H(+) = 3-(3,4-dichlorophenyl)-1-methylurea + formaldehyde + 2 oxidized [2Fe-2S]-[ferredoxin] + H2O. It carries out the reaction fluometuron + 2 reduced [2Fe-2S]-[ferredoxin] + O2 + 2 H(+) = 3-[3-(trifluoromethyl)phenyl]-1-methylurea + formaldehyde + 2 oxidized [2Fe-2S]-[ferredoxin] + H2O. It catalyses the reaction fenuron + 2 reduced [2Fe-2S]-[ferredoxin] + O2 + 2 H(+) = 1-methyl-3-phenylurea + formaldehyde + 2 oxidized [2Fe-2S]-[ferredoxin] + H2O. It functions in the pathway xenobiotic degradation. Activity is stimulated in vitro by coexpression of a [3Fe-4S]-type ferredoxin. Its function is as follows. Part of the multicomponent N,N-dimethyl phenylurea N-demethylase responsible for the initial N-demethylation step during the bacterial metabolism of N,N-dimethyl-substituted phenylurea herbicides. Catalyzes the mono-N-demethylation of N,N-dimethyl-substituted phenylurea herbicides to their mono-N-demethylated derivatives. Is active on isoproturon (IPU), chlorotoluron, metoxuron, monoron, diuron, fluometuron and fenuron, but cannot transform the N-methoxy-N-methyl-substituted herbicides. In Sphingobium sp. (strain YBL2), this protein is N,N-dimethyl phenylurea N-demethylase subunit beta.